We begin with the raw amino-acid sequence, 130 residues long: T-cell receptor alpha chain V region PHDS58 (130 aa).

Residues 1–20 form the signal peptide; sequence MLLALLPVLGIHFVLRDAQA. Residues 21–114 form a v segment region; it reads QSVTQPDARV…SAVYFCAVSG (94 aa). A glycan (N-linked (GlcNAc...) asparagine) is linked at N90. The tract at residues 115-130 is j segment; sequence FASALTFGSGTKVIVL.

The protein is T-cell receptor alpha chain V region PHDS58 of Mus musculus (Mouse).